The following is a 445-amino-acid chain: Exodeoxyribonuclease 7 large subunit (445 aa).

Belongs to the XseA family. As to quaternary structure, heterooligomer composed of large and small subunits.

It is found in the cytoplasm. It carries out the reaction Exonucleolytic cleavage in either 5'- to 3'- or 3'- to 5'-direction to yield nucleoside 5'-phosphates.. Its function is as follows. Bidirectionally degrades single-stranded DNA into large acid-insoluble oligonucleotides, which are then degraded further into small acid-soluble oligonucleotides. This Xanthomonas oryzae pv. oryzae (strain MAFF 311018) protein is Exodeoxyribonuclease 7 large subunit.